The primary structure comprises 201 residues: Endoribonuclease YbeY (201 aa).

Residues His120, His124, and His130 each contribute to the Zn(2+) site. The tract at residues 151 to 201 (DGADGADGADGARGAADGAADGGEGRRGDQGRRGDQGRGGGAGEPPAAPAR) is disordered. A compositionally biased stretch (basic and acidic residues) spans 173–186 (GEGRRGDQGRRGDQ).

It belongs to the endoribonuclease YbeY family. The cofactor is Zn(2+).

The protein resides in the cytoplasm. Single strand-specific metallo-endoribonuclease involved in late-stage 70S ribosome quality control and in maturation of the 3' terminus of the 16S rRNA. This Frankia casuarinae (strain DSM 45818 / CECT 9043 / HFP020203 / CcI3) protein is Endoribonuclease YbeY.